Consider the following 515-residue polypeptide: 2-isopropylmalate synthase (515 aa).

Residues 4-266 (IKFFDTTLRD…ETRLNLQEIK (263 aa)) form the Pyruvate carboxyltransferase domain. Mn(2+) contacts are provided by Asp13, His201, His203, and Asn237. Residues 391-515 (QLSSIQVQYG…RGENEKVATP (125 aa)) are regulatory domain.

This sequence belongs to the alpha-IPM synthase/homocitrate synthase family. LeuA type 1 subfamily. As to quaternary structure, homodimer. It depends on Mn(2+) as a cofactor.

It localises to the cytoplasm. The enzyme catalyses 3-methyl-2-oxobutanoate + acetyl-CoA + H2O = (2S)-2-isopropylmalate + CoA + H(+). It functions in the pathway amino-acid biosynthesis; L-leucine biosynthesis; L-leucine from 3-methyl-2-oxobutanoate: step 1/4. Catalyzes the condensation of the acetyl group of acetyl-CoA with 3-methyl-2-oxobutanoate (2-ketoisovalerate) to form 3-carboxy-3-hydroxy-4-methylpentanoate (2-isopropylmalate). In Geobacillus kaustophilus (strain HTA426), this protein is 2-isopropylmalate synthase.